Consider the following 338-residue polypeptide: 1-aminocyclopropane-1-carboxylate deaminase (338 aa).

Lys51 carries the post-translational modification N6-(pyridoxal phosphate)lysine. Residue Ser78 is the Nucleophile of the active site.

The protein belongs to the ACC deaminase/D-cysteine desulfhydrase family. As to quaternary structure, homotrimer. It depends on pyridoxal 5'-phosphate as a cofactor.

It carries out the reaction 1-aminocyclopropane-1-carboxylate + H2O = 2-oxobutanoate + NH4(+). In terms of biological role, catalyzes a cyclopropane ring-opening reaction, the irreversible conversion of 1-aminocyclopropane-1-carboxylate (ACC) to ammonia and alpha-ketobutyrate. Allows growth on ACC as a nitrogen source. This chain is 1-aminocyclopropane-1-carboxylate deaminase, found in Burkholderia cenocepacia (strain ATCC BAA-245 / DSM 16553 / LMG 16656 / NCTC 13227 / J2315 / CF5610) (Burkholderia cepacia (strain J2315)).